The chain runs to 373 residues: Putative F-box/kelch-repeat protein At5g24040 (373 aa).

An F-box domain is found at 2-50 (VKWSELPPEILHLISLKIDNPFDLIHFRSVCSFWRSSSLLKFRHMTSLR). Kelch repeat units lie at residues 165–207 (NEYM…PFKG) and 262–308 (YDFH…CTFS).

This Arabidopsis thaliana (Mouse-ear cress) protein is Putative F-box/kelch-repeat protein At5g24040.